Reading from the N-terminus, the 346-residue chain is MQKLTIRRPDDWHLHLRDGAMLEGVIGDTSRHFARAIIMPNLVPPVVTTADATAYRERILKALPAGDRFQPLMTLYLTEHTNPDDVEEGKKSGLITAVKLYPAGATTNSHGGVRNLDKAMPTLERMAKIGLPLCVHGEVTTPEVDIFDREAVFIETVLDPLRQRLPELKVTMEHVTTSDGIDYIKSAKANLAGSITTHHLIINRNAILVGGIRPHYYCLPVAKRESHRLALRAAATSGDSRFFLGTDSAPHVDPLKECACGCAGIYTSINTMSCLAHVFEQDGALDKLEAFASLNGPAWYGLAPNEERITLIRRVESVTFPEKIETGAGTVTVFDPMFPLHWDVEG.

His-13 and His-15 together coordinate Zn(2+). Substrate-binding positions include His-15 to Arg-17 and Asn-41. Zn(2+) contacts are provided by Lys-99, His-136, and His-174. The residue at position 99 (Lys-99) is an N6-carboxylysine. His-136 is a binding site for substrate. Leu-219 contributes to the substrate binding site. Asp-247 is a Zn(2+) binding site. Asp-247 is a catalytic residue. 2 residues coordinate substrate: His-251 and Ala-263.

This sequence belongs to the metallo-dependent hydrolases superfamily. DHOase family. Class II DHOase subfamily. As to quaternary structure, homodimer. It depends on Zn(2+) as a cofactor.

The enzyme catalyses (S)-dihydroorotate + H2O = N-carbamoyl-L-aspartate + H(+). Its pathway is pyrimidine metabolism; UMP biosynthesis via de novo pathway; (S)-dihydroorotate from bicarbonate: step 3/3. Catalyzes the reversible cyclization of carbamoyl aspartate to dihydroorotate. The sequence is that of Dihydroorotase from Rhizobium rhizogenes (strain K84 / ATCC BAA-868) (Agrobacterium radiobacter).